We begin with the raw amino-acid sequence, 525 residues long: tRNA-splicing endonuclease subunit Sen54 (525 aa).

M1 is modified (N-acetylmethionine). Positions 1–46 (MEPEPEPGSVEVPAGRVLSASELRAARSRSQKLPQRSHGPKDFLPD) are disordered. Residues 7–23 (PGSVEVPAGRVLSASEL) show a composition bias toward low complexity. Position 178 is a phosphoserine (S178). Y180 carries the post-translational modification Phosphotyrosine. Residues 220–232 (LPPVSLAASSSPA) are compositionally biased toward low complexity. Residues 220-273 (LPPVSLAASSSPACDQSSQYPEEKSQDSSPRQGSELPLQFLGSSEPCSDLARED) are disordered.

This sequence belongs to the SEN54 family. As to quaternary structure, tRNA splicing endonuclease is a heterotetramer composed of TSEN2, TSEN15, TSEN34/LENG5 and TSEN54. tRNA splicing endonuclease complex also contains proteins of the pre-mRNA 3'-end processing machinery such as CLP1, CPSF1, CPSF4 and CSTF2.

It localises to the nucleus. The protein localises to the nucleolus. Functionally, non-catalytic subunit of the tRNA-splicing endonuclease complex, a complex responsible for identification and cleavage of the splice sites in pre-tRNA. It cleaves pre-tRNA at the 5' and 3' splice sites to release the intron. The products are an intron and two tRNA half-molecules bearing 2',3' cyclic phosphate and 5'-OH termini. There are no conserved sequences at the splice sites, but the intron is invariably located at the same site in the gene, placing the splice sites an invariant distance from the constant structural features of the tRNA body. The tRNA splicing endonuclease is also involved in mRNA processing via its association with pre-mRNA 3'-end processing factors, establishing a link between pre-tRNA splicing and pre-mRNA 3'-end formation, suggesting that the endonuclease subunits function in multiple RNA-processing events. The chain is tRNA-splicing endonuclease subunit Sen54 (Tsen54) from Mus musculus (Mouse).